Consider the following 593-residue polypeptide: MLPAHKQTLEALLADSVKQVAHALKGADAATVAPVITLERPKVAAHGDVACNVAMQLAKPLGTNPRQLAEQIVAALTAQPGAQGLVEAAEIAGPGFINLRLSAAAKQAVIAAVFDQGRAFGTSDREKGKQVLLEFVSANPTGPLHVGHGRQAALGDVLANVIASQGYAVHREFYYNDAGVQIGNLAISTQARARGLKPGDAGWPEAAYNGEYIADIARDFLNGETVAASDGEPVKGTGDVEDLDAIRKFAVTYLRREQDMDLQAFGVKFDQYYLESSLYSEGRVEKTVDALIKAGMTYEQDGALWLRTTDEGDDKDRVMRKSDGTYTYFVPDVAYHVTKWERGFTKVINIQGSDHHGTIARVRAGLQGLHIGIPKGYPDYVLHKMVTVMREGQEVKISKRAGSYVTVRDLIEWSGGAAAGQEAAPDLIDEATITRGRDAVRFFLISRKADTEFVFDIDLALKQNDENPVYYVQYAHARICSVLNELKSRYNVDVAQLPGADLSQLTSAQAASLMQKLAEYPDMLTHAANELAPHAVAFYLRDLAGEFHSFYNAERVLVDDEAPRNARAALLAATRQVLENGLAVLGVSAPAKM.

Residues 138 to 148 carry the 'HIGH' region motif; the sequence is ANPTGPLHVGH.

It belongs to the class-I aminoacyl-tRNA synthetase family. Monomer.

It is found in the cytoplasm. The enzyme catalyses tRNA(Arg) + L-arginine + ATP = L-arginyl-tRNA(Arg) + AMP + diphosphate. This Burkholderia lata (strain ATCC 17760 / DSM 23089 / LMG 22485 / NCIMB 9086 / R18194 / 383) protein is Arginine--tRNA ligase.